Consider the following 235-residue polypeptide: Phosphoribosylaminoimidazole-succinocarboxamide synthase (235 aa).

Belongs to the SAICAR synthetase family.

The catalysed reaction is 5-amino-1-(5-phospho-D-ribosyl)imidazole-4-carboxylate + L-aspartate + ATP = (2S)-2-[5-amino-1-(5-phospho-beta-D-ribosyl)imidazole-4-carboxamido]succinate + ADP + phosphate + 2 H(+). The protein operates within purine metabolism; IMP biosynthesis via de novo pathway; 5-amino-1-(5-phospho-D-ribosyl)imidazole-4-carboxamide from 5-amino-1-(5-phospho-D-ribosyl)imidazole-4-carboxylate: step 1/2. The protein is Phosphoribosylaminoimidazole-succinocarboxamide synthase of Exiguobacterium sibiricum (strain DSM 17290 / CCUG 55495 / CIP 109462 / JCM 13490 / 255-15).